Consider the following 231-residue polypeptide: Somatolactin (231 aa).

The N-terminal stretch at 1 to 24 (MNMMTVKQQGVWAALLWPYLLTAS) is a signal peptide. 3 cysteine pairs are disulfide-bonded: Cys-29-Cys-39, Cys-89-Cys-205, and Cys-222-Cys-230. An N-linked (GlcNAc...) asparagine glycan is attached at Asn-145.

The protein belongs to the somatotropin/prolactin family. As to expression, pituitary gland.

It localises to the secreted. This is Somatolactin from Paralichthys olivaceus (Bastard halibut).